The chain runs to 204 residues: Large ribosomal subunit protein eL15 (204 aa).

It belongs to the eukaryotic ribosomal protein eL15 family. As to quaternary structure, component of the large ribosomal subunit.

It is found in the cytoplasm. Functionally, component of the large ribosomal subunit. The ribosome is a large ribonucleoprotein complex responsible for the synthesis of proteins in the cell. The sequence is that of Large ribosomal subunit protein eL15 (rpl15) from Carassius auratus (Goldfish).